Consider the following 90-residue polypeptide: Cell division topological specificity factor (90 aa).

The protein belongs to the MinE family.

Prevents the cell division inhibition by proteins MinC and MinD at internal division sites while permitting inhibition at polar sites. This ensures cell division at the proper site by restricting the formation of a division septum at the midpoint of the long axis of the cell. This is Cell division topological specificity factor from Francisella tularensis subsp. tularensis (strain FSC 198).